Here is a 275-residue protein sequence, read N- to C-terminus: Rhamnulose-1-phosphate aldolase (275 aa).

Residue E117 is part of the active site. Residues H141, H143, and H212 each coordinate Zn(2+).

Belongs to the aldolase class II family. RhaD subfamily. Homotetramer. Requires Zn(2+) as cofactor.

The protein resides in the cytoplasm. It catalyses the reaction L-rhamnulose 1-phosphate = (S)-lactaldehyde + dihydroxyacetone phosphate. The protein operates within carbohydrate degradation; L-rhamnose degradation; glycerone phosphate from L-rhamnose: step 3/3. Catalyzes the reversible cleavage of L-rhamnulose-1-phosphate to dihydroxyacetone phosphate (DHAP) and L-lactaldehyde. This Salmonella choleraesuis (strain SC-B67) protein is Rhamnulose-1-phosphate aldolase.